A 149-amino-acid chain; its full sequence is MERTFLMIKPDAVQRNLIGEVISRIERKGLKLVGGKLMQVPMELAETHYGEHQGKPFYNDLISFITSAPVFAMVVEGEDAVNVSRHIIGSTNPSEASPGSIRGDLGLTVGRNIIHGSDSLDSAEREINLWFNENEITSYASPRDAWLYE.

Residues Lys9, Phe57, Arg85, Thr91, Arg102, and Asn112 each coordinate ATP. The Pros-phosphohistidine intermediate role is filled by His115.

This sequence belongs to the NDK family. As to quaternary structure, homotetramer. Requires Mg(2+) as cofactor.

It is found in the cytoplasm. It catalyses the reaction a 2'-deoxyribonucleoside 5'-diphosphate + ATP = a 2'-deoxyribonucleoside 5'-triphosphate + ADP. It carries out the reaction a ribonucleoside 5'-diphosphate + ATP = a ribonucleoside 5'-triphosphate + ADP. In terms of biological role, major role in the synthesis of nucleoside triphosphates other than ATP. The ATP gamma phosphate is transferred to the NDP beta phosphate via a ping-pong mechanism, using a phosphorylated active-site intermediate. In Staphylococcus aureus (strain MSSA476), this protein is Nucleoside diphosphate kinase.